A 251-amino-acid polypeptide reads, in one-letter code: MLAKRIIPCLDVREGRVVKGINFEDLRDAGSILEQARFYNNELADELVFLDISASLESRKTTLEEVLKVSEEVFIPLTVGGGISSVERARDAFLHGADKVSVNTAAVYDPKLITRIADQYGSQAVVVAIDVKKVGEKYIVHTHSGKELTKYEALEWARMVQELGAGEILLTSMDRDGTKAGYDNEILREISTSVHIPVIASGGAGNLEHLYDGFAKGCADAALAASIFHFRQYTIREAKEYLRERGIEVRL.

Active-site residues include Asp11 and Asp130.

This sequence belongs to the HisA/HisF family. In terms of assembly, heterodimer of HisH and HisF.

Its subcellular location is the cytoplasm. The enzyme catalyses 5-[(5-phospho-1-deoxy-D-ribulos-1-ylimino)methylamino]-1-(5-phospho-beta-D-ribosyl)imidazole-4-carboxamide + L-glutamine = D-erythro-1-(imidazol-4-yl)glycerol 3-phosphate + 5-amino-1-(5-phospho-beta-D-ribosyl)imidazole-4-carboxamide + L-glutamate + H(+). The protein operates within amino-acid biosynthesis; L-histidine biosynthesis; L-histidine from 5-phospho-alpha-D-ribose 1-diphosphate: step 5/9. IGPS catalyzes the conversion of PRFAR and glutamine to IGP, AICAR and glutamate. The HisF subunit catalyzes the cyclization activity that produces IGP and AICAR from PRFAR using the ammonia provided by the HisH subunit. The chain is Imidazole glycerol phosphate synthase subunit HisF from Chlorobium phaeobacteroides (strain BS1).